The chain runs to 278 residues: Probable endonuclease 4 (278 aa).

H69, H109, E145, D179, H182, H216, D229, H231, and E261 together coordinate Zn(2+).

It belongs to the AP endonuclease 2 family. Zn(2+) is required as a cofactor.

The enzyme catalyses Endonucleolytic cleavage to 5'-phosphooligonucleotide end-products.. Endonuclease IV plays a role in DNA repair. It cleaves phosphodiester bonds at apurinic or apyrimidinic (AP) sites, generating a 3'-hydroxyl group and a 5'-terminal sugar phosphate. The sequence is that of Probable endonuclease 4 from Buchnera aphidicola subsp. Baizongia pistaciae (strain Bp).